The following is a 93-amino-acid chain: MTKSELIEKLIALNPSLPEKAVEDGVKDILENIMLTLEQAKRVEIRGFGSFSLHYRQPRIGRNPKTGASVKLDAKYVPHFKAGKDLKERVDLV.

This sequence belongs to the bacterial histone-like protein family. Heterodimer of an alpha and a beta chain.

Functionally, this protein is one of the two subunits of integration host factor, a specific DNA-binding protein that functions in genetic recombination as well as in transcriptional and translational control. The polypeptide is Integration host factor subunit beta (Haemophilus ducreyi (strain 35000HP / ATCC 700724)).